The sequence spans 245 residues: Uridylate kinase (245 aa).

12–15 provides a ligand contact to ATP; that stretch reads KLSG. Residues 20–25 are involved in allosteric activation by GTP; that stretch reads GERGVG. Gly54 serves as a coordination point for UMP. The ATP site is built by Gly55 and Arg59. UMP-binding positions include Asp74 and 135 to 142; that span reads IGSPYFST. Positions 163, 169, and 172 each coordinate ATP.

It belongs to the UMP kinase family. As to quaternary structure, homohexamer.

It is found in the cytoplasm. It catalyses the reaction UMP + ATP = UDP + ADP. Its pathway is pyrimidine metabolism; CTP biosynthesis via de novo pathway; UDP from UMP (UMPK route): step 1/1. Its activity is regulated as follows. Allosterically activated by GTP. Inhibited by UTP. In terms of biological role, catalyzes the reversible phosphorylation of UMP to UDP. This chain is Uridylate kinase, found in Streptococcus pneumoniae serotype 2 (strain D39 / NCTC 7466).